The sequence spans 114 residues: Protein ELF4-LIKE 4 (114 aa).

The disordered stretch occupies residues 87–114 (SVDASSEGESSGTLKSDGKANQKRFRSG). Over residues 89-100 (DASSEGESSGTL) the composition is skewed to polar residues.

It belongs to the EARLY FLOWERING 4 family. In terms of assembly, homodimer.

Its subcellular location is the nucleus. Functionally, component of the central CCA1/LHY-TOC1 feedback loop in the circadian clock that promotes clock accuracy and is required for sustained rhythms in the absence of daily light/dark cycles. The protein is Protein ELF4-LIKE 4 (EFL4) of Arabidopsis thaliana (Mouse-ear cress).